The chain runs to 422 residues: 4-hydroxy-3-methylbut-2-en-1-yl diphosphate synthase (flavodoxin) (422 aa).

Residues cysteine 316, cysteine 319, cysteine 362, and glutamate 369 each contribute to the [4Fe-4S] cluster site.

The protein belongs to the IspG family. Requires [4Fe-4S] cluster as cofactor.

It carries out the reaction (2E)-4-hydroxy-3-methylbut-2-enyl diphosphate + oxidized [flavodoxin] + H2O + 2 H(+) = 2-C-methyl-D-erythritol 2,4-cyclic diphosphate + reduced [flavodoxin]. It functions in the pathway isoprenoid biosynthesis; isopentenyl diphosphate biosynthesis via DXP pathway; isopentenyl diphosphate from 1-deoxy-D-xylulose 5-phosphate: step 5/6. Converts 2C-methyl-D-erythritol 2,4-cyclodiphosphate (ME-2,4cPP) into 1-hydroxy-2-methyl-2-(E)-butenyl 4-diphosphate. In Anaplasma marginale (strain St. Maries), this protein is 4-hydroxy-3-methylbut-2-en-1-yl diphosphate synthase (flavodoxin).